We begin with the raw amino-acid sequence, 165 residues long: Ribosome maturation factor RimM (165 aa).

The region spanning glutamate 89–tryptophan 161 is the PRC barrel domain.

Belongs to the RimM family. Binds ribosomal protein uS19.

It localises to the cytoplasm. In terms of biological role, an accessory protein needed during the final step in the assembly of 30S ribosomal subunit, possibly for assembly of the head region. Essential for efficient processing of 16S rRNA. May be needed both before and after RbfA during the maturation of 16S rRNA. It has affinity for free ribosomal 30S subunits but not for 70S ribosomes. This Clostridium botulinum (strain Eklund 17B / Type B) protein is Ribosome maturation factor RimM.